Reading from the N-terminus, the 298-residue chain is Aspartate carbamoyltransferase catalytic subunit (298 aa).

Positions 50 and 51 each coordinate carbamoyl phosphate. Residue Lys79 participates in L-aspartate binding. Carbamoyl phosphate-binding residues include Arg100, His128, and Gln131. Residues Arg160 and Arg221 each coordinate L-aspartate. Carbamoyl phosphate is bound by residues Leu260 and Pro261.

The protein belongs to the aspartate/ornithine carbamoyltransferase superfamily. ATCase family. In terms of assembly, heterooligomer of catalytic and regulatory chains.

The catalysed reaction is carbamoyl phosphate + L-aspartate = N-carbamoyl-L-aspartate + phosphate + H(+). The protein operates within pyrimidine metabolism; UMP biosynthesis via de novo pathway; (S)-dihydroorotate from bicarbonate: step 2/3. Functionally, catalyzes the condensation of carbamoyl phosphate and aspartate to form carbamoyl aspartate and inorganic phosphate, the committed step in the de novo pyrimidine nucleotide biosynthesis pathway. This is Aspartate carbamoyltransferase catalytic subunit from Methanospirillum hungatei JF-1 (strain ATCC 27890 / DSM 864 / NBRC 100397 / JF-1).